Here is a 224-residue protein sequence, read N- to C-terminus: uncharacterized protein (224 aa).

Residues S9–E68 form the 4Fe-4S domain. [4Fe-4S] cluster is bound by residues C26, C29, C34, and C51.

It depends on [4Fe-4S] cluster as a cofactor.

This is an uncharacterized protein from Methanocaldococcus jannaschii (strain ATCC 43067 / DSM 2661 / JAL-1 / JCM 10045 / NBRC 100440) (Methanococcus jannaschii).